Consider the following 400-residue polypeptide: MAKAKFERVKPHVNIGTIGHVDHGKTTLTAAITTVLAKKGLAQQKRYDEIDNAPEERERGITINTAHVEYETEKRHYAHVDCPGHADYVKNMITGAAQMDGAILVVSAADGPMPQTREHILLARQVGVPYIVVFLNKADMVDDPELMELVEMEVRDLLSTYEFPGDEVPVVAGSALKALECGCGKEDCPWCGKILELMDKVDEYIPTPQRDVDKPFLMPVEDVFTITGRGTVATGRVERGRITIGEEVEIVGLMDAPRKTVVTGLEMFRKVLDEAVAGDNIGALLRGVDRKEIERGQVLAKPGTIKPHRKFFAEVYVLTKEEGGRHTPFFNGYRPQFYFRTTDVTGVIHLPEGVEMVMPGDNVKIHIELITPIAIEEGLRFAIREGGRTVGAGVVTAIEE.

The region spanning 10–209 is the tr-type G domain; the sequence is KPHVNIGTIG…KVDEYIPTPQ (200 aa). The tract at residues 19–26 is G1; the sequence is GHVDHGKT. 19-26 serves as a coordination point for GTP; sequence GHVDHGKT. A Mg(2+)-binding site is contributed by T26. The segment at 60–64 is G2; that stretch reads GITIN. The G3 stretch occupies residues 81–84; that stretch reads DCPG. GTP contacts are provided by residues 81–85 and 136–139; these read DCPGH and NKAD. Residues 136–139 form a G4 region; that stretch reads NKAD. Residues 174–176 form a G5 region; the sequence is SAL.

Belongs to the TRAFAC class translation factor GTPase superfamily. Classic translation factor GTPase family. EF-Tu/EF-1A subfamily. As to quaternary structure, monomer.

It localises to the cytoplasm. The catalysed reaction is GTP + H2O = GDP + phosphate + H(+). GTP hydrolase that promotes the GTP-dependent binding of aminoacyl-tRNA to the A-site of ribosomes during protein biosynthesis. This chain is Elongation factor Tu 2, found in Carboxydothermus hydrogenoformans (strain ATCC BAA-161 / DSM 6008 / Z-2901).